We begin with the raw amino-acid sequence, 357 residues long: MGIQHMLPSTQTAIIAGPQGEFQLSHDVPVTPLADDEIIMKTAAVALNPVDTKLVGDFITPGAIFGFDCAGVIVAVGPKVGNGLAIGDRVCGSARGMNREKPLGGAFAEYVMLPADLTLRIPPAMTFAEAASLGTALVSACMSLFWTMQIPASLQEPAEKPFPVLVYGGSTATGTMLLQVLKICGVRTLTTCSPKNFDLVRSYGADEVFDYNSPTCAQDIREATRNNLKYAVDCITEDSTIKICYSAIGRAGGQYIALNPYPEHLATRKVIKPGWILATLITGEGSAWPEPYHREPDPEIRALAKPAYSAVQKLLDEGRLRSHPIRVKDGGLAAVLDGVEVLRKGEISGQKLVYCFN.

Position 50 to 53 (50 to 53) interacts with NADP(+); that stretch reads VDTK. 135–142 lines the substrate pocket; it reads TALVSACM. NADP(+) is bound by residues 170–173, 193–196, Tyr-211, and 258–259; these read STAT, SPKN, and LN. 278–282 is a binding site for substrate; the sequence is ATLIT. Residue 347–348 coordinates NADP(+); that stretch reads IS.

Belongs to the zinc-containing alcohol dehydrogenase family. Monomer.

It participates in mycotoxin biosynthesis. Trans-enoyl reductase; part of the gene cluster that mediates the biosynthesis of burnettramic acids, an unusual class of bolaamphiphilic pyrrolizidinediones that display potent antibacterial, antifungal, and cytotoxic activities. The first step of the biosynthesis of burnettramic acids is the hydroxylation of proline by the proline hydroxylase buaE to generate 4-hydroxyproline. The PKS-NRPS buaA and trans-enoyl reductase buaC construct the highly reduced polyketide chain, and the condensation (C) domain of buaA then catalyzes the amide bond formation with the activated 4-hydroxyproline. This is followed by the R domain releasing the nascent polyketide-peptide directly via a Dieckmann condensation to afford a tetramic acid fused to the hydroxyproline, generating the bicyclic pyrrolidinedione moiety. The cytochrome P450 monooxygenases buaD and buaG are likely responsible for the multiple hydroxylations on the polyketide chain and its terminus, although in the heterologous context, buaD does not appear to be required. Therefore, while buaG may be a multifunctional cytochrome P450 monooxygenase, it cannot be ruled out that the two secondary alcohols on the polyketide chain could have an acetate origin. Finally, the glycosyltransferase buaB transfers beta-D-mannose to the aglycone burnettramic acid A to form burnettramic acid A. Burnettramic acid B is a minor cis-pyrrolizidine epimer of burnettramic acid A and it is likely that small amounts of it form naturally in acidic environments. This is Trans-enoyl reductase buaC from Petromyces alliaceus (Aspergillus alliaceus).